A 181-amino-acid chain; its full sequence is uncharacterized protein (181 aa).

This is an uncharacterized protein from Enterobacteria phage T4 (Bacteriophage T4).